The primary structure comprises 1202 residues: Putative late blight resistance protein homolog R1B-8 (1202 aa).

Coiled-coil stretches lie at residues 345 to 368 (RYSDSLAFLKNQLQVIQTEFESLQ) and 437 to 459 (LRMNEEIVGFEDVIEKLRNRLLN). The 316-residue stretch at 426 to 741 (IARTSSQLAR…ISESFIKSCE (316 aa)) folds into the NB-ARC domain. Position 471–478 (471–478 (GMPGLGKT)) interacts with ATP. LRR repeat units follow at residues 865–889 (FKFLKVLDLEHQVIIDFIPTELFYL), 908–936 (LWNLETLILKSRSASKHNRVLLPSTVWDM), 1011–1036 (PIRLEILKLYNRSKAFKTIPFCISAP), 1040–1059 (YLKLSRFYLDSQYLSETADH), 1060–1084 (LKHLEVLKLSCVEFGDHGEWEVSNG), 1086–1111 (FPQLKILKLEYVSLMKWIVADDVFPN), and 1128–1151 (SCFMDILSLKYIKVDEYSESVVQS).

This sequence belongs to the disease resistance NB-LRR family.

The protein resides in the cytoplasm. It is found in the membrane. Its function is as follows. Confers resistance to late blight (Phytophthora infestans) races carrying the avirulence gene Avr1. Resistance proteins guard the plant against pathogens that contain an appropriate avirulence protein via an indirect interaction with this avirulence protein. That triggers a defense system including the hypersensitive response, which restricts the pathogen growth. This Solanum demissum (Wild potato) protein is Putative late blight resistance protein homolog R1B-8 (R1B-8).